Consider the following 119-residue polypeptide: Toxin ICK-8 (119 aa).

An N-terminal signal peptide occupies residues M1 to A19. 4 cysteine pairs are disulfide-bonded: C59-C74, C67-C80, C71-C116, and C73-C87.

This sequence belongs to the neurotoxin 25 family. ICK-8 subfamily. Expressed by the venom gland.

The protein localises to the secreted. In terms of biological role, ion channel inhibitor. This is Toxin ICK-8 from Trittame loki (Brush-footed trapdoor spider).